Reading from the N-terminus, the 291-residue chain is Glutathione S-transferase 2 (291 aa).

Residues 2 to 83 (SPVKVFGHPM…YILRKYGGTA (82 aa)) enclose the GST N-terminal domain. Glutathione contacts are provided by residues 41–42 (HK), 54–55 (KM), and 67–68 (KS). In terms of domain architecture, GST C-terminal spans 93–223 (GIEELAMVDV…RVCKHMPTEF (131 aa)).

The protein belongs to the GST superfamily. Phi family.

The catalysed reaction is RX + glutathione = an S-substituted glutathione + a halide anion + H(+). Functionally, conjugation of reduced glutathione to a wide number of exogenous and endogenous hydrophobic electrophiles. The polypeptide is Glutathione S-transferase 2 (GSTA2) (Triticum aestivum (Wheat)).